The chain runs to 316 residues: Adenine deaminase (316 aa).

Zn(2+) contacts are provided by His-14, His-16, and His-194. The active-site Proton donor is Glu-197. Position 275 (Asp-275) interacts with Zn(2+). A substrate-binding site is contributed by Asp-276.

Belongs to the metallo-dependent hydrolases superfamily. Adenosine and AMP deaminases family. Adenine deaminase type 2 subfamily. Zn(2+) serves as cofactor.

The catalysed reaction is adenine + H2O + H(+) = hypoxanthine + NH4(+). Its function is as follows. Catalyzes the hydrolytic deamination of adenine to hypoxanthine. Plays an important role in the purine salvage pathway and in nitrogen catabolism. The protein is Adenine deaminase of Pseudomonas aeruginosa (strain UCBPP-PA14).